The sequence spans 140 residues: Phosphoribosyl-AMP cyclohydrolase (140 aa).

Position 85 (Asp-85) interacts with Mg(2+). Cys-86 contributes to the Zn(2+) binding site. Residues Asp-87 and Asp-89 each contribute to the Mg(2+) site. Zn(2+)-binding residues include Cys-102 and Cys-109.

Belongs to the PRA-CH family. Homodimer. Requires Mg(2+) as cofactor. It depends on Zn(2+) as a cofactor.

It is found in the cytoplasm. The catalysed reaction is 1-(5-phospho-beta-D-ribosyl)-5'-AMP + H2O = 1-(5-phospho-beta-D-ribosyl)-5-[(5-phospho-beta-D-ribosylamino)methylideneamino]imidazole-4-carboxamide. It participates in amino-acid biosynthesis; L-histidine biosynthesis; L-histidine from 5-phospho-alpha-D-ribose 1-diphosphate: step 3/9. Its function is as follows. Catalyzes the hydrolysis of the adenine ring of phosphoribosyl-AMP. This Bradyrhizobium diazoefficiens (strain JCM 10833 / BCRC 13528 / IAM 13628 / NBRC 14792 / USDA 110) protein is Phosphoribosyl-AMP cyclohydrolase.